We begin with the raw amino-acid sequence, 399 residues long: 1-deoxy-D-xylulose 5-phosphate reductoisomerase (399 aa).

Threonine 16, glycine 17, serine 18, isoleucine 19, glycine 42, arginine 43, asparagine 44, and asparagine 127 together coordinate NADPH. Lysine 128 contacts 1-deoxy-D-xylulose 5-phosphate. Glutamate 129 serves as a coordination point for NADPH. Residue aspartate 153 coordinates Mn(2+). 1-deoxy-D-xylulose 5-phosphate-binding residues include serine 154, glutamate 155, serine 179, and histidine 202. A Mn(2+)-binding site is contributed by glutamate 155. Glycine 208 serves as a coordination point for NADPH. The 1-deoxy-D-xylulose 5-phosphate site is built by serine 215, asparagine 220, lysine 221, and glutamate 224. Glutamate 224 lines the Mn(2+) pocket.

The protein belongs to the DXR family. The cofactor is Mg(2+). It depends on Mn(2+) as a cofactor.

It catalyses the reaction 2-C-methyl-D-erythritol 4-phosphate + NADP(+) = 1-deoxy-D-xylulose 5-phosphate + NADPH + H(+). Its pathway is isoprenoid biosynthesis; isopentenyl diphosphate biosynthesis via DXP pathway; isopentenyl diphosphate from 1-deoxy-D-xylulose 5-phosphate: step 1/6. In terms of biological role, catalyzes the NADPH-dependent rearrangement and reduction of 1-deoxy-D-xylulose-5-phosphate (DXP) to 2-C-methyl-D-erythritol 4-phosphate (MEP). This Caulobacter vibrioides (strain NA1000 / CB15N) (Caulobacter crescentus) protein is 1-deoxy-D-xylulose 5-phosphate reductoisomerase.